A 151-amino-acid chain; its full sequence is Leukocyte cell-derived chemotaxin-2 (151 aa).

A signal peptide spans 1–18 (MFSTKALLLAGLISTALA). 3 disulfides stabilise this stretch: C25-C60, C36-C41, and C99-C142. Residues H53, D57, and H138 each contribute to the Zn(2+) site.

The protein belongs to the LECT2/MIM-1 family. In terms of assembly, interacts with MET. As to expression, highly expressed in adult and fetal liver and weakly in testis. Not expressed in bone marrow.

The protein resides in the cytoplasm. It localises to the secreted. Functionally, has a neutrophil chemotactic activity. Also a positive regulator of chondrocyte proliferation. Does not show metalloendopeptidase activity. This is Leukocyte cell-derived chemotaxin-2 (LECT2) from Homo sapiens (Human).